We begin with the raw amino-acid sequence, 178 residues long: Large ribosomal subunit protein uL6 (178 aa).

It belongs to the universal ribosomal protein uL6 family. As to quaternary structure, part of the 50S ribosomal subunit.

Functionally, this protein binds to the 23S rRNA, and is important in its secondary structure. It is located near the subunit interface in the base of the L7/L12 stalk, and near the tRNA binding site of the peptidyltransferase center. The polypeptide is Large ribosomal subunit protein uL6 (Streptococcus uberis (strain ATCC BAA-854 / 0140J)).